The primary structure comprises 323 residues: Beta-ketoacyl-[acyl-carrier-protein] synthase III (323 aa).

Active-site residues include C114 and H250. An ACP-binding region spans residues 251 to 255 (QANIR). N280 is a catalytic residue.

It belongs to the thiolase-like superfamily. FabH family. Homodimer.

Its subcellular location is the cytoplasm. The enzyme catalyses malonyl-[ACP] + acetyl-CoA + H(+) = 3-oxobutanoyl-[ACP] + CO2 + CoA. It functions in the pathway lipid metabolism; fatty acid biosynthesis. Catalyzes the condensation reaction of fatty acid synthesis by the addition to an acyl acceptor of two carbons from malonyl-ACP. Catalyzes the first condensation reaction which initiates fatty acid synthesis and may therefore play a role in governing the total rate of fatty acid production. Possesses both acetoacetyl-ACP synthase and acetyl transacylase activities. Its substrate specificity determines the biosynthesis of branched-chain and/or straight-chain of fatty acids. The chain is Beta-ketoacyl-[acyl-carrier-protein] synthase III from Ruegeria pomeroyi (strain ATCC 700808 / DSM 15171 / DSS-3) (Silicibacter pomeroyi).